The sequence spans 89 residues: Large ribosomal subunit protein bL27 (89 aa).

The protein belongs to the bacterial ribosomal protein bL27 family.

This chain is Large ribosomal subunit protein bL27, found in Cytophaga hutchinsonii (strain ATCC 33406 / DSM 1761 / CIP 103989 / NBRC 15051 / NCIMB 9469 / D465).